We begin with the raw amino-acid sequence, 466 residues long: Ribulose bisphosphate carboxylase (466 aa).

N111 serves as a coordination point for substrate. K166 (proton acceptor) is an active-site residue. K168 provides a ligand contact to substrate. The Mg(2+) site is built by K191, D193, and E194. N6-carboxylysine is present on K191. H287 serves as the catalytic Proton acceptor. Substrate contacts are provided by R288, H321, and S368.

It belongs to the RuBisCO large chain family. Type II subfamily. As to quaternary structure, homodimer. The cofactor is Mg(2+).

It catalyses the reaction 2 (2R)-3-phosphoglycerate + 2 H(+) = D-ribulose 1,5-bisphosphate + CO2 + H2O. The catalysed reaction is D-ribulose 1,5-bisphosphate + O2 = 2-phosphoglycolate + (2R)-3-phosphoglycerate + 2 H(+). RuBisCO catalyzes two reactions: the carboxylation of D-ribulose 1,5-bisphosphate, the primary event in carbon dioxide fixation, as well as the oxidative fragmentation of the pentose substrate. Both reactions occur simultaneously and in competition at the same active site. This chain is Ribulose bisphosphate carboxylase, found in Rhodospirillum rubrum (strain ATCC 11170 / ATH 1.1.1 / DSM 467 / LMG 4362 / NCIMB 8255 / S1).